A 159-amino-acid polypeptide reads, in one-letter code: Ribonuclease H (159 aa).

In terms of domain architecture, RNase H type-1 spans 4-145 (THKQVNIYTD…CDKLARDAAE (142 aa)). Residues D13, E51, D73, and D137 each coordinate Mg(2+).

The protein belongs to the RNase H family. In terms of assembly, monomer. The cofactor is Mg(2+).

Its subcellular location is the cytoplasm. The catalysed reaction is Endonucleolytic cleavage to 5'-phosphomonoester.. In terms of biological role, endonuclease that specifically degrades the RNA of RNA-DNA hybrids. The polypeptide is Ribonuclease H (Shewanella denitrificans (strain OS217 / ATCC BAA-1090 / DSM 15013)).